A 621-amino-acid polypeptide reads, in one-letter code: tRNA 5-methylaminomethyl-2-thiouridine biosynthesis bifunctional protein MnmC (621 aa).

The interval 1–222 is tRNA (mnm(5)s(2)U34)-methyltransferase; it reads MKNANLSFKG…KRQMSSAVLE (222 aa). Positions 250 to 621 are FAD-dependent cmnm(5)s(2)U34 oxidoreductase; that stretch reads IGTGVAGLAT…LIRKLKKGLK (372 aa).

In the N-terminal section; belongs to the methyltransferase superfamily. tRNA (mnm(5)s(2)U34)-methyltransferase family. The protein in the C-terminal section; belongs to the DAO family. Requires FAD as cofactor.

Its subcellular location is the cytoplasm. It catalyses the reaction 5-aminomethyl-2-thiouridine(34) in tRNA + S-adenosyl-L-methionine = 5-methylaminomethyl-2-thiouridine(34) in tRNA + S-adenosyl-L-homocysteine + H(+). In terms of biological role, catalyzes the last two steps in the biosynthesis of 5-methylaminomethyl-2-thiouridine (mnm(5)s(2)U) at the wobble position (U34) in tRNA. Catalyzes the FAD-dependent demodification of cmnm(5)s(2)U34 to nm(5)s(2)U34, followed by the transfer of a methyl group from S-adenosyl-L-methionine to nm(5)s(2)U34, to form mnm(5)s(2)U34. This is tRNA 5-methylaminomethyl-2-thiouridine biosynthesis bifunctional protein MnmC from Campylobacter concisus (strain 13826).